Reading from the N-terminus, the 181-residue chain is MEKIIIDENQFLRTISRISHEIIEKHQRLDNIVIVGIKRRGAEIAELIKKKIADLANVELPSIDLDITFYRDDLEYAEPDSKSPTYSGASSFISIHNKEVILVDDVLYTGRTIRAALDALVDFGRAAKIELVIFVDRGHRELPIRADYVGKNVPTSRSEEVQVRTLKFDNCYEVALLSPTK.

Residues 39–40, 104–112, R137, and V161 contribute to the substrate site; these read RR and DDVLYTGRT. The short motif at 100 to 112 is the PRPP-binding element; it reads VILVDDVLYTGRT.

Belongs to the purine/pyrimidine phosphoribosyltransferase family. PyrR subfamily.

The catalysed reaction is UMP + diphosphate = 5-phospho-alpha-D-ribose 1-diphosphate + uracil. Functionally, regulates the transcription of the pyrimidine nucleotide (pyr) operon in response to exogenous pyrimidines. Its function is as follows. Also displays a weak uracil phosphoribosyltransferase activity which is not physiologically significant. The polypeptide is Bifunctional protein PyrR (Pasteurella multocida (strain Pm70)).